Consider the following 309-residue polypeptide: Calponin-2 (309 aa).

Ser2 carries the N-acetylserine modification. 2 positions are modified to N6-acetyllysine: Lys8 and Lys25. One can recognise a Calponin-homology (CH) domain in the interval 28–132 (PQKEAELRTW…SLLALAGKAK (105 aa)). Ser138 is subject to Phosphoserine. Calponin-like repeat units lie at residues 166–191 (IGLQ…RHLY), 206–231 (ISLQ…RHIY), and 245–269 (MSLQ…RQIY). Positions 283-309 (APSGTGDCPDPGEVPEYPPYYQEEAGY) are disordered.

This sequence belongs to the calponin family. In terms of tissue distribution, heart and smooth muscle.

In terms of biological role, thin filament-associated protein that is implicated in the regulation and modulation of smooth muscle contraction. It is capable of binding to actin, calmodulin and tropomyosin. The interaction of calponin with actin inhibits the actomyosin Mg-ATPase activity. The protein is Calponin-2 (CNN2) of Homo sapiens (Human).